The primary structure comprises 171 residues: Shikimate kinase (171 aa).

14-19 provides a ligand contact to ATP; it reads GAGKST. Residue S18 coordinates Mg(2+). 3 residues coordinate substrate: D36, R60, and G82. Residue R120 participates in ATP binding. R139 lines the substrate pocket. Residue Q156 coordinates ATP.

Belongs to the shikimate kinase family. In terms of assembly, monomer. Mg(2+) serves as cofactor.

The protein resides in the cytoplasm. The catalysed reaction is shikimate + ATP = 3-phosphoshikimate + ADP + H(+). Its pathway is metabolic intermediate biosynthesis; chorismate biosynthesis; chorismate from D-erythrose 4-phosphate and phosphoenolpyruvate: step 5/7. In terms of biological role, catalyzes the specific phosphorylation of the 3-hydroxyl group of shikimic acid using ATP as a cosubstrate. The chain is Shikimate kinase from Shewanella sediminis (strain HAW-EB3).